The primary structure comprises 88 residues: Carboxysome shell vertex protein CsoS4A (88 aa).

One can recognise a BMV domain in the interval 1–76 (MLICKVLKPL…SDLTIVGIID (76 aa)).

Belongs to the CcmL/EutN family. CsoS4 subfamily. Homopentamer.

Its subcellular location is the carboxysome. Functionally, probably forms vertices in the carboxysome, a polyhedral inclusion where RuBisCO (ribulose bisphosphate carboxylase, cbbL-cbbS) is sequestered. Has been modeled to induce curvature upon insertion into an otherwise flat hexagonal layer of major carboxysome subunits. Has not been identified in purified carboxysomes; it is expected to be present in very low amounts. The polypeptide is Carboxysome shell vertex protein CsoS4A (Prochlorococcus marinus subsp. pastoris (strain CCMP1986 / NIES-2087 / MED4)).